A 311-amino-acid chain; its full sequence is 1D-myo-inositol 2-acetamido-2-deoxy-alpha-D-glucopyranoside deacetylase (311 aa).

3 residues coordinate Zn(2+): His-29, Asp-32, and His-162.

It belongs to the MshB deacetylase family. It depends on Zn(2+) as a cofactor.

It catalyses the reaction 1D-myo-inositol 2-acetamido-2-deoxy-alpha-D-glucopyranoside + H2O = 1D-myo-inositol 2-amino-2-deoxy-alpha-D-glucopyranoside + acetate. Functionally, catalyzes the deacetylation of 1D-myo-inositol 2-acetamido-2-deoxy-alpha-D-glucopyranoside (GlcNAc-Ins) in the mycothiol biosynthesis pathway. The sequence is that of 1D-myo-inositol 2-acetamido-2-deoxy-alpha-D-glucopyranoside deacetylase from Corynebacterium efficiens (strain DSM 44549 / YS-314 / AJ 12310 / JCM 11189 / NBRC 100395).